The sequence spans 260 residues: Proansamycin X synthase (260 aa).

Cysteine 73 (acyl-thioester intermediate) is an active-site residue. Residues histidine 111 and aspartate 126 contribute to the active site.

The protein belongs to the arylamine N-acetyltransferase family.

It participates in antibiotic biosynthesis; rifamycin B biosynthesis. Functionally, catalyzes the release of the completed linear polyketide from the rif PKS by forming an intramolecular amide bond, in this way terminating polyketide assembly and forming the macrocyclic compound proansamycin X, an intermediate in the rifamycin B biosynthesis. In Amycolatopsis mediterranei (strain S699) (Nocardia mediterranei), this protein is Proansamycin X synthase (rifF).